The sequence spans 567 residues: Proline--tRNA ligase (567 aa).

It belongs to the class-II aminoacyl-tRNA synthetase family. ProS type 1 subfamily. Homodimer.

It is found in the cytoplasm. The enzyme catalyses tRNA(Pro) + L-proline + ATP = L-prolyl-tRNA(Pro) + AMP + diphosphate. Catalyzes the attachment of proline to tRNA(Pro) in a two-step reaction: proline is first activated by ATP to form Pro-AMP and then transferred to the acceptor end of tRNA(Pro). As ProRS can inadvertently accommodate and process non-cognate amino acids such as alanine and cysteine, to avoid such errors it has two additional distinct editing activities against alanine. One activity is designated as 'pretransfer' editing and involves the tRNA(Pro)-independent hydrolysis of activated Ala-AMP. The other activity is designated 'posttransfer' editing and involves deacylation of mischarged Ala-tRNA(Pro). The misacylated Cys-tRNA(Pro) is not edited by ProRS. The polypeptide is Proline--tRNA ligase (Fusobacterium nucleatum subsp. nucleatum (strain ATCC 25586 / DSM 15643 / BCRC 10681 / CIP 101130 / JCM 8532 / KCTC 2640 / LMG 13131 / VPI 4355)).